We begin with the raw amino-acid sequence, 354 residues long: UDP-N-acetylglucosamine--N-acetylmuramyl-(pentapeptide) pyrophosphoryl-undecaprenol N-acetylglucosamine transferase (354 aa).

Residues 11–13, Arg-164, Ser-194, and Gln-289 contribute to the UDP-N-acetyl-alpha-D-glucosamine site; that span reads TAG.

It belongs to the glycosyltransferase 28 family. MurG subfamily.

It is found in the cell membrane. The catalysed reaction is di-trans,octa-cis-undecaprenyl diphospho-N-acetyl-alpha-D-muramoyl-L-alanyl-D-glutamyl-meso-2,6-diaminopimeloyl-D-alanyl-D-alanine + UDP-N-acetyl-alpha-D-glucosamine = di-trans,octa-cis-undecaprenyl diphospho-[N-acetyl-alpha-D-glucosaminyl-(1-&gt;4)]-N-acetyl-alpha-D-muramoyl-L-alanyl-D-glutamyl-meso-2,6-diaminopimeloyl-D-alanyl-D-alanine + UDP + H(+). Its pathway is cell wall biogenesis; peptidoglycan biosynthesis. In terms of biological role, cell wall formation. Catalyzes the transfer of a GlcNAc subunit on undecaprenyl-pyrophosphoryl-MurNAc-pentapeptide (lipid intermediate I) to form undecaprenyl-pyrophosphoryl-MurNAc-(pentapeptide)GlcNAc (lipid intermediate II). In Clostridium botulinum (strain Kyoto / Type A2), this protein is UDP-N-acetylglucosamine--N-acetylmuramyl-(pentapeptide) pyrophosphoryl-undecaprenol N-acetylglucosamine transferase.